Here is a 192-residue protein sequence, read N- to C-terminus: Ion-translocating oxidoreductase complex subunit A (192 aa).

Transmembrane regions (helical) follow at residues 5-25 (ILLIISTALINNFVLVKFLGL), 39-59 (IGMSLATMFVLTVASISAYLI), 63-83 (ILTPLSATFLRTLVFILVIAV), 102-122 (LLGIFLPLITTNCAVLGVALL), 134-154 (VIYGFGASLGFGLVLVLFAAL), and 171-191 (SIALITAGLMSLAFMGFTGLV).

Belongs to the NqrDE/RnfAE family. The complex is composed of six subunits: RnfA, RnfB, RnfC, RnfD, RnfE and RnfG.

It is found in the cell inner membrane. Its function is as follows. Part of a membrane-bound complex that couples electron transfer with translocation of ions across the membrane. In Pasteurella multocida (strain Pm70), this protein is Ion-translocating oxidoreductase complex subunit A.